Reading from the N-terminus, the 602-residue chain is Probable translation initiation factor IF-2 (602 aa).

In terms of domain architecture, tr-type G spans leucine 15–leucine 230. Residues glycine 24 to threonine 31 are G1. GTP is bound at residue glycine 24–threonine 31. The interval alanine 49 to histidine 53 is G2. Residues aspartate 86–glycine 89 are G3. GTP is bound by residues aspartate 86–histidine 90 and asparagine 140–aspartate 143. Positions asparagine 140–aspartate 143 are G4. The interval serine 208–glutamate 210 is G5.

Belongs to the TRAFAC class translation factor GTPase superfamily. Classic translation factor GTPase family. IF-2 subfamily.

Its function is as follows. Function in general translation initiation by promoting the binding of the formylmethionine-tRNA to ribosomes. Seems to function along with eIF-2. In Natronomonas pharaonis (strain ATCC 35678 / DSM 2160 / CIP 103997 / JCM 8858 / NBRC 14720 / NCIMB 2260 / Gabara) (Halobacterium pharaonis), this protein is Probable translation initiation factor IF-2.